The sequence spans 352 residues: uncharacterized protein (352 aa).

This sequence to Synechocystis PCC 6803 slr0039.

This is an uncharacterized protein from Archaeoglobus fulgidus (strain ATCC 49558 / DSM 4304 / JCM 9628 / NBRC 100126 / VC-16).